The sequence spans 250 residues: NAD(P)H-quinone oxidoreductase subunit S, chloroplastic (250 aa).

The transit peptide at 1–48 directs the protein to the chloroplast; the sequence is MATSSITIPTIRTPIHRSKFLGQTHQFSTVNRSVFPPPKQQSKLYQVK. A Glycyl lysine isopeptide (Lys-Gly) (interchain with G-Cter in ubiquitin) cross-link involves residue lysine 52. 2 stretches are compositionally biased toward basic and acidic residues: residues 76–94 and 106–115; these read QRNI…NETE and VPEDGFEKEM. Disordered regions lie at residues 76 to 163 and 222 to 250; these read QRNI…KPKA and REKG…EAAP. Residues 136 to 146 show a composition bias toward pro residues; that stretch reads NPPPPPPPPPA.

Part of the chloroplast NDH complex, composed of a mixture of chloroplast and nucleus encoded subunits. Component of the electron donor-binding subcomplex, at least composed of NDHS, NDHT and NDHU. Interacts with the NDH subcomplex A via the protein NDHT and NDHU. In terms of processing, arg-193 is the critical site for the high affinity binding of NDH to ferredoxin.

It is found in the plastid. The protein localises to the chloroplast thylakoid membrane. The enzyme catalyses a plastoquinone + NADH + (n+1) H(+)(in) = a plastoquinol + NAD(+) + n H(+)(out). It catalyses the reaction a plastoquinone + NADPH + (n+1) H(+)(in) = a plastoquinol + NADP(+) + n H(+)(out). NDH shuttles electrons from NAD(P)H:plastoquinone, via FMN and iron-sulfur (Fe-S) centers, to quinones in the photosynthetic chain and possibly in a chloroplast respiratory chain. The immediate electron acceptor for the enzyme in this species is believed to be plastoquinone. Couples the redox reaction to proton translocation, and thus conserves the redox energy in a proton gradient. Required for the efficient operation of ferredoxin-dependent plastoquinone reduction. Forms the electron donor-binding subcomplex in association with the NDHT and NDHU subunits. The polypeptide is NAD(P)H-quinone oxidoreductase subunit S, chloroplastic (Arabidopsis thaliana (Mouse-ear cress)).